Here is a 196-residue protein sequence, read N- to C-terminus: Nodulation protein A (196 aa).

It belongs to the NodA family.

It localises to the cytoplasm. Its function is as follows. N-acyltransferase required for nodulation. Acts in the production of a small, heat-stable compound (Nod) that stimulates mitosis in various plant protoplasts. The polypeptide is Nodulation protein A (Mesorhizobium sp. (strain 7653R)).